A 445-amino-acid chain; its full sequence is MDFLSHAMLSRSESTQILCELSQIDESTMDPQYTEDDVLARLFVFSSSSPQTVLNVKKYEDVSVGRSNTCNYQLLQFTASYKHFRVYSVLIDDDMDPLVYCEDQSSNGTFLNHRLIGKGNSVLLSDGDILDVRHCASFLFQQKYTTDNDFHHEYAGERFNITQRLLGIGGFSRIYMAMDNNTGGQYACKIIDKKKISTKRFFEDHEMTILRKLDHPNIIKVNMEYNSETQFFIFEEMVTGGDLFSYLTKLGTVPEVTTLFIMFQILQGLKYLHEQNIIHRDLKLENILIASSSDTIFRIILTDFGVARCMQKGKRLSTFVGTPEYTAPEIQRLKGRSQVEKENSSGYGKEVDLWSLGVIMFLLLSGNSPSFADGVKEKQVDFRDPVWKSVSRQAKDLISNLLKTNPPDRFTVKQCLSHPWFARHSSRLTKLYETRILKPLKHSRL.

The region spanning 62–116 (VSVGRSNTCNYQLLQFTASYKHFRVYSVLIDDDMDPLVYCEDQSSNGTFLNHRLI) is the FHA domain. The Protein kinase domain occupies 160-421 (NITQRLLGIG…VKQCLSHPWF (262 aa)). Residues 166 to 174 (LGIGGFSRI) and K189 each bind ATP. The active-site Proton acceptor is the D281.

It belongs to the protein kinase superfamily. CAMK Ser/Thr protein kinase family. CHEK2 subfamily.

The enzyme catalyses L-seryl-[protein] + ATP = O-phospho-L-seryl-[protein] + ADP + H(+). It catalyses the reaction L-threonyl-[protein] + ATP = O-phospho-L-threonyl-[protein] + ADP + H(+). Its function is as follows. Probable protein kinase required for meiotic recombination. This Schizosaccharomyces pombe (strain 972 / ATCC 24843) (Fission yeast) protein is Meiosis-specific serine/threonine-protein kinase mek1 (mek1).